We begin with the raw amino-acid sequence, 417 residues long: Cobalamin binding intrinsic factor (417 aa).

Residues 1–18 form the signal peptide; the sequence is MAWFALYLLSLLWATAGT. 3 disulfide bridges follow: cysteine 26/cysteine 246, cysteine 103/cysteine 288, and cysteine 143/cysteine 182. Aspartate 171 is a binding site for cob(II)alamin. Residue serine 191 is modified to Phosphoserine. Cob(II)alamin contacts are provided by aspartate 222 and glutamine 270. N-linked (GlcNAc...) asparagine glycans are attached at residues asparagine 311, asparagine 330, and asparagine 334. Cob(II)alamin-binding positions include 365–370 and 386–395; these read SWGLVV and WQFLSGVTPL. An N-linked (GlcNAc...) asparagine glycan is attached at asparagine 413.

The protein belongs to the eukaryotic cobalamin transport proteins family. In terms of assembly, interacts with CUBN (via CUB domains). As to expression, gastric mucosa.

The protein resides in the secreted. Functionally, promotes absorption of the essential vitamin cobalamin (Cbl) in the ileum. After interaction with CUBN, the CBLIF-cobalamin complex is internalized via receptor-mediated endocytosis. This is Cobalamin binding intrinsic factor from Homo sapiens (Human).